The chain runs to 125 residues: Ribosome-binding factor A (125 aa).

Belongs to the RbfA family. As to quaternary structure, monomer. Binds 30S ribosomal subunits, but not 50S ribosomal subunits or 70S ribosomes.

Its subcellular location is the cytoplasm. In terms of biological role, one of several proteins that assist in the late maturation steps of the functional core of the 30S ribosomal subunit. Associates with free 30S ribosomal subunits (but not with 30S subunits that are part of 70S ribosomes or polysomes). Required for efficient processing of 16S rRNA. May interact with the 5'-terminal helix region of 16S rRNA. This is Ribosome-binding factor A from Akkermansia muciniphila (strain ATCC BAA-835 / DSM 22959 / JCM 33894 / BCRC 81048 / CCUG 64013 / CIP 107961 / Muc).